The sequence spans 196 residues: Probable DNA-directed RNA polymerase subunit delta (196 aa).

In terms of domain architecture, HTH HARE-type spans 14 to 81 (LSMIEVAHEI…GDNVWGLRSW (68 aa)). The segment covering 119–150 (DDDDVIDYDDDDPEDEDLDNDYDDEDDDDDEG) has biased composition (acidic residues). The segment at 119 to 196 (DDDDVIDYDD…DADLDEENQD (78 aa)) is disordered. A compositionally biased stretch (basic and acidic residues) spans 151–161 (SHELKQYTKDL). 2 stretches are compositionally biased toward acidic residues: residues 162–176 (DDIDDGDDPEDELAD) and 186–196 (SDADLDEENQD).

This sequence belongs to the RpoE family. In terms of assembly, RNAP is composed of a core of 2 alpha, a beta and a beta' subunits. The core is associated with a delta subunit and one of several sigma factors.

Participates in both the initiation and recycling phases of transcription. In the presence of the delta subunit, RNAP displays an increased specificity of transcription, a decreased affinity for nucleic acids, and an increased efficiency of RNA synthesis because of enhanced recycling. This is Probable DNA-directed RNA polymerase subunit delta from Ligilactobacillus salivarius (strain UCC118) (Lactobacillus salivarius).